Reading from the N-terminus, the 176-residue chain is NAD(P)H-quinone oxidoreductase subunit 6, chloroplastic (176 aa).

5 helical membrane passes run F10–T30, P32–P52, A61–M81, W93–I115, and F152–A172.

It belongs to the complex I subunit 6 family. In terms of assembly, NDH is composed of at least 16 different subunits, 5 of which are encoded in the nucleus.

The protein localises to the plastid. It is found in the chloroplast thylakoid membrane. It carries out the reaction a plastoquinone + NADH + (n+1) H(+)(in) = a plastoquinol + NAD(+) + n H(+)(out). It catalyses the reaction a plastoquinone + NADPH + (n+1) H(+)(in) = a plastoquinol + NADP(+) + n H(+)(out). Its function is as follows. NDH shuttles electrons from NAD(P)H:plastoquinone, via FMN and iron-sulfur (Fe-S) centers, to quinones in the photosynthetic chain and possibly in a chloroplast respiratory chain. The immediate electron acceptor for the enzyme in this species is believed to be plastoquinone. Couples the redox reaction to proton translocation, and thus conserves the redox energy in a proton gradient. This is NAD(P)H-quinone oxidoreductase subunit 6, chloroplastic (ndhG) from Vitis vinifera (Grape).